Reading from the N-terminus, the 380-residue chain is Cobalt-precorrin-5B C(1)-methyltransferase (380 aa).

This sequence belongs to the CbiD family.

The catalysed reaction is Co-precorrin-5B + S-adenosyl-L-methionine = Co-precorrin-6A + S-adenosyl-L-homocysteine. It functions in the pathway cofactor biosynthesis; adenosylcobalamin biosynthesis; cob(II)yrinate a,c-diamide from sirohydrochlorin (anaerobic route): step 6/10. Its function is as follows. Catalyzes the methylation of C-1 in cobalt-precorrin-5B to form cobalt-precorrin-6A. In Salinispora arenicola (strain CNS-205), this protein is Cobalt-precorrin-5B C(1)-methyltransferase.